The primary structure comprises 602 residues: Alpha-glucosides permease MPH3 (602 aa).

At 1–106 (MKNLSFLINR…AAAWSLLVST (106 aa)) the chain is on the cytoplasmic side. The helical transmembrane segment at 107–127 (TLIMEGYDTAILGAFYALPIF) threads the bilayer. The Extracellular portion of the chain corresponds to 128-142 (QRKFGSQNDKTGEWE). The chain crosses the membrane as a helical span at residues 143–163 (ISASWQIGLTLCYMAGEIVGL). Over 164 to 178 (QLTGPSVDLVGNRYT) the chain is Cytoplasmic. A helical transmembrane segment spans residues 179–199 (LIIALFFLAAFTFILYFCNSL). A topological domain (extracellular) is located at residue glycine 200. The chain crosses the membrane as a helical span at residues 201 to 221 (MIAVGQALCGMPWGCFQCLTV). Residues 222–234 (SYASEICPLALRY) are Cytoplasmic-facing. The helical transmembrane segment at 235-255 (YLTTYSNLCWLFGQLFAAGIM) threads the bilayer. The Extracellular segment spans residues 256–270 (KNSQKKYADSELGYK). A helical transmembrane segment spans residues 271–291 (LPFALQWILPVPLALGIFFAP). The Cytoplasmic portion of the chain corresponds to 292-363 (ESPWWLVKKG…EDKINRRRTR (72 aa)). The helical transmembrane segment at 364–384 (ITCLCWAGQATCGSILIGYST) threads the bilayer. Topologically, residues 385–397 (YFYEKAGVSTEMS) are extracellular. The chain crosses the membrane as a helical span at residues 398-418 (FTFSIIQYCLGICATFLSWWA). Topologically, residues 419–426 (SKYFGRYD) are cytoplasmic. The helical transmembrane segment at 427–447 (LYAFGLAFQTIVFFIIGGLGC) threads the bilayer. The Extracellular portion of the chain corresponds to 448–459 (SSTHGSKMGSGS). The helical transmembrane segment at 460–480 (LLMAVAFFYNLGIAPVVFCLV) threads the bilayer. Topologically, residues 481-492 (SEMPSSRLRTKT) are cytoplasmic. The chain crosses the membrane as a helical span at residues 493-513 (IILARNTYNVVSIICSVLILY). Topologically, residues 514–525 (QLNSKKWNWGAK) are extracellular. A helical transmembrane segment spans residues 526-546 (SGFFWGVLCFCTLIWAVVDLP). The Cytoplasmic portion of the chain corresponds to 547-602 (ETAGKTFVEINELFKLGVSARKFKSTKVDPFVVKNPPKDVSHNDPKGDIEASIAEE). The tract at residues 580–602 (KNPPKDVSHNDPKGDIEASIAEE) is disordered. The segment covering 582–595 (PPKDVSHNDPKGDI) has biased composition (basic and acidic residues).

This sequence belongs to the major facilitator superfamily. Sugar transporter (TC 2.A.1.1) family.

The protein resides in the cell membrane. In terms of biological role, high-affinity uptake of maltose and maltotriose. Also transports alpha-methylglucoside, glucose and turanose but not melezitose or trehalose. This chain is Alpha-glucosides permease MPH3 (MPH3), found in Saccharomyces cerevisiae (strain AWRI1631) (Baker's yeast).